Reading from the N-terminus, the 459-residue chain is tRNA modification GTPase MnmE (459 aa).

Arg-29, Glu-91, and Arg-130 together coordinate (6S)-5-formyl-5,6,7,8-tetrahydrofolate. A TrmE-type G domain is found at 225-381 (GVKVAIVGRP…LEEALEQLVT (157 aa)). Residue Asn-235 coordinates K(+). Residues 235–240 (NVGKSS), 254–260 (TDLPGTT), and 279–282 (DTAG) contribute to the GTP site. Ser-239 is a Mg(2+) binding site. The K(+) site is built by Thr-254, Leu-256, and Thr-259. Thr-260 lines the Mg(2+) pocket. Lys-459 provides a ligand contact to (6S)-5-formyl-5,6,7,8-tetrahydrofolate.

It belongs to the TRAFAC class TrmE-Era-EngA-EngB-Septin-like GTPase superfamily. TrmE GTPase family. As to quaternary structure, homodimer. Heterotetramer of two MnmE and two MnmG subunits. It depends on K(+) as a cofactor.

Its subcellular location is the cytoplasm. Its function is as follows. Exhibits a very high intrinsic GTPase hydrolysis rate. Involved in the addition of a carboxymethylaminomethyl (cmnm) group at the wobble position (U34) of certain tRNAs, forming tRNA-cmnm(5)s(2)U34. This is tRNA modification GTPase MnmE from Synechococcus sp. (strain JA-3-3Ab) (Cyanobacteria bacterium Yellowstone A-Prime).